The chain runs to 584 residues: Arginine--tRNA ligase (584 aa).

The short motif at 126–136 (PNIAKEMHVGH) is the 'HIGH' region element.

Belongs to the class-I aminoacyl-tRNA synthetase family. In terms of assembly, monomer.

It localises to the cytoplasm. The enzyme catalyses tRNA(Arg) + L-arginine + ATP = L-arginyl-tRNA(Arg) + AMP + diphosphate. This Nostoc punctiforme (strain ATCC 29133 / PCC 73102) protein is Arginine--tRNA ligase.